Consider the following 954-residue polypeptide: Valine--tRNA ligase (954 aa).

Positions 48–58 (PNVTGSLHMGH) match the 'HIGH' region motif. The 'KMSKS' region signature appears at 560-564 (KMSKS). ATP is bound at residue Lys563. Positions 883–954 (AGFINKEAEL…QTQYQAIENL (72 aa)) form a coiled coil.

Belongs to the class-I aminoacyl-tRNA synthetase family. ValS type 1 subfamily. In terms of assembly, monomer.

It is found in the cytoplasm. The catalysed reaction is tRNA(Val) + L-valine + ATP = L-valyl-tRNA(Val) + AMP + diphosphate. Its function is as follows. Catalyzes the attachment of valine to tRNA(Val). As ValRS can inadvertently accommodate and process structurally similar amino acids such as threonine, to avoid such errors, it has a 'posttransfer' editing activity that hydrolyzes mischarged Thr-tRNA(Val) in a tRNA-dependent manner. In Actinobacillus pleuropneumoniae serotype 3 (strain JL03), this protein is Valine--tRNA ligase.